The primary structure comprises 778 residues: Jhy protein homolog (778 aa).

Disordered stretches follow at residues 62–271, 334–408, 631–654, and 721–746; these read DRIR…PKTD, QYES…LDTS, EKGK…QKRD, and IPKP…AGKE. The span at 118 to 139 shows a compositional bias: basic and acidic residues; sequence PIEDKYSDLRYDPNWKSKKEEG. Residues 223–234 are compositionally biased toward low complexity; sequence SSLSPYVKSSSS. Polar residues predominate over residues 334–344; that stretch reads QYESTKSSNVP. Over residues 358 to 371 the composition is skewed to basic residues; it reads SRRPAKLKIRKQCK. Positions 375–389 are enriched in polar residues; it reads GLKSSTTEEVTASQG. Residues 390 to 402 show a composition bias toward low complexity; the sequence is NQNNPPRQQQNQN. Over residues 633–650 the composition is skewed to basic residues; sequence GKKHKKRSSSKNTKLKGY. The segment covering 733-746 has biased composition (basic and acidic residues); the sequence is ASKEQKNPTYAGKE.

In terms of biological role, required for the normal development of cilia in brain ependymal cells lining the ventricular surfaces. In Homo sapiens (Human), this protein is Jhy protein homolog.